The sequence spans 349 residues: RxLR effector protein CRE15 (349 aa).

The first 33 residues, 1–33 (MITFKRLSSARWGALLTSIAVLFFLAITKGADA), serve as a signal peptide directing secretion. Positions 46–62 (RRLRTTTADAYYASEDR) match the RxLR-dEER motif.

The protein belongs to the RxLR effector family. As to quaternary structure, interacts directly with the potato ortholog of vascular highway 1 (VH1)-interacting kinase (VIK), encoding a predicted MEK kinase (MAP3K).

The protein localises to the secreted. Its subcellular location is the host cell membrane. Effector that promotes P.infestans virulence in Nicotiana benthamiana and potato. Attenuates cell death triggered by the pathogen-associated molecular pattern infestin 1 (INF1), indicating that the effector suppresses pattern-triggered immunity. However, it does not attenuate cell death triggered by a range of resistance proteins, suggesting that it specifically suppresses INF1-triggered cell death (ICD). Targets host MAP3K VIK in order to utilize or promote its ability to negatively regulate immunity. This is RxLR effector protein CRE15 from Phytophthora infestans (strain T30-4) (Potato late blight agent).